A 226-amino-acid polypeptide reads, in one-letter code: MMLHIPEVLTPAQVSEIRQRLDAADWVDGKATVGAQGAQVKKNRQLPELSPVGMELGQIILKALVNNPLFFAAALPMRYMPPLFNRYEGGEHYGFHIDGSVRNIPGSNLSLRTDLSCTLFLCEPEDYDGGELIVADTYGEHEVKLPAGDMILYPSSSLHKVEPVTRGARVCSFFWLQSMVADDAKRSLLFELDQNIQKLRAKLGDCEEVVGLTGHYHNLLRQWAAV.

A Fe2OG dioxygenase domain is found at 78–178 (RYMPPLFNRY…RVCSFFWLQS (101 aa)). Fe cation is bound by residues His-96, Asp-98, and His-159. Arg-169 is a 2-oxoglutarate binding site.

Fe(2+) serves as cofactor. Requires L-ascorbate as cofactor.

The chain is PKHD-type hydroxylase mma_3620 from Janthinobacterium sp. (strain Marseille) (Minibacterium massiliensis).